The chain runs to 435 residues: Glutamyl-tRNA reductase (435 aa).

Substrate is bound by residues 49–52 (TCNR), S109, 114–116 (ETQ), and Q120. C50 serves as the catalytic Nucleophile. 189–194 (GAGEMS) serves as a coordination point for NADP(+).

The protein belongs to the glutamyl-tRNA reductase family. Homodimer.

The catalysed reaction is (S)-4-amino-5-oxopentanoate + tRNA(Glu) + NADP(+) = L-glutamyl-tRNA(Glu) + NADPH + H(+). Its pathway is porphyrin-containing compound metabolism; protoporphyrin-IX biosynthesis; 5-aminolevulinate from L-glutamyl-tRNA(Glu): step 1/2. Functionally, catalyzes the NADPH-dependent reduction of glutamyl-tRNA(Glu) to glutamate 1-semialdehyde (GSA). The sequence is that of Glutamyl-tRNA reductase from Listeria innocua serovar 6a (strain ATCC BAA-680 / CLIP 11262).